Here is a 237-residue protein sequence, read N- to C-terminus: Flagellar brake protein YcgR (237 aa).

Residues 108–225 form the PilZ domain; sequence QRRRQFRVTT…MERKIQSAVF (118 aa).

It belongs to the YcgR family. In terms of assembly, monomer. Interacts with the flagellar basal bodies.

It is found in the bacterial flagellum basal body. Its function is as follows. Acts as a flagellar brake, regulating swimming and swarming in a bis-(3'-5') cyclic diguanylic acid (c-di-GMP)-dependent manner. Binds 1 c-di-GMP dimer per subunit. Increasing levels of c-di-GMP lead to decreased motility. This chain is Flagellar brake protein YcgR, found in Serratia proteamaculans (strain 568).